An 810-amino-acid polypeptide reads, in one-letter code: Plasminogen (810 aa).

The N-terminal stretch at 1–19 (MEHKEVVLLLLLFLKSGQG) is a signal peptide. The region spanning 20 to 98 (EPLDDYVNTQ…RDVVLFEKKV (79 aa)) is the PAN domain. Intrachain disulfides connect Cys49–Cys73, Cys53–Cys61, Cys103–Cys181, Cys124–Cys164, Cys152–Cys176, Cys185–Cys262, Cys188–Cys316, Cys206–Cys245, Cys234–Cys257, Cys275–Cys352, Cys296–Cys335, and Cys324–Cys347. 2 Kringle domains span residues 103 to 181 (CKTG…ILEC) and 184 to 262 (ECMH…IPRC). The segment at 126–145 (KWSSTSPHRPRFSPATHPSE) is disordered. L-lysine is bound by residues Arg136, Asp158, and Arg172. Residue Ser268 is glycosylated (O-linked (GalNAc...) serine). A Kringle 3 domain is found at 275–352 (CLKGTGENYR…RWEYCKIPSC (78 aa)). N-linked (GlcNAc...) asparagine glycosylation occurs at Asn308. O-linked (GalNAc...) threonine glycosylation is present at Thr365. Disulfide bonds link Cys377–Cys454, Cys398–Cys437, Cys426–Cys449, Cys481–Cys560, Cys502–Cys543, Cys531–Cys555, Cys567–Cys685, Cys577–Cys585, and Cys607–Cys623. Kringle domains lie at 377–454 (CYHG…LKKC) and 481–560 (CMFG…VPQC). Residues 396 to 416 (KKCQSWSSMTPHRHQKTPENY) are disordered. L-lysine is bound by residues Asp432 and Arg445. Residues 581–808 (VVGGCVAHPH…FVTWIEGVMR (228 aa)) form the Peptidase S1 domain. Ser597 is subject to Phosphoserine. Residues His622 and Asp665 each act as charge relay system in the active site. The residue at position 688 (Ser688) is a Phosphoserine. Disulfide bonds link Cys699-Cys766, Cys729-Cys745, and Cys756-Cys784. The active-site Charge relay system is the Ser760.

Belongs to the peptidase S1 family. Plasminogen subfamily. Interacts (both mature PLG and the angiostatin peptide) with CSPG4 and AMOT. Interacts (via the Kringle domains) with HRG; the interaction tethers PLG to the cell surface and enhances its activation. Interacts (via Kringle 4 domain) with ADA; the interaction stimulates PLG activation when in complex with DPP4. Angiostatin: Interacts with ATP5F1A; the interaction inhibits most of the angiogenic effects of angiostatin. Interacts (plasmin) with iripin-8, a serine protease inhibitor from Ixodes ricinus saliva. Interacts (plasmin) with iripin-1, a serine protease inhibitor from Ixodes ricinus saliva. Interacts (plasmin) with Kazal-type trypsin inhibitor, a serine protease inhibitor from Aedes aegypti. As to quaternary structure, (Microbial infection) Interacts with C.albicans GPD2; the interaction is direct and provides active plasmin on the surface of fungal cells. In terms of assembly, (Microbial infection) Interacts with Staphylococcus aureus protein FnbB; this interaction provides active plasmin on the surface of bacterial cells. (Microbial infection) Interacts with P.falciparum (strain NF54) enolase ENO (via DKSLVK motif); the interaction occurs at the ookinete cell surface and is required for ookinete invasion of the mosquito midgut. As to quaternary structure, (Microbial infection) Interacts with B.burgdorferi OspC. Post-translationally, N-linked glycan contains N-acetyllactosamine and sialic acid. O-linked glycans consist of Gal-GalNAc disaccharide modified with up to 2 sialic acid residues (microheterogeneity). In terms of processing, in the presence of the inhibitor, the activation involves only cleavage after Arg-580, yielding two chains held together by two disulfide bonds. In the absence of the inhibitor, the activation involves additionally the removal of the activation peptide. (Microbial infection) The Y.pestis Pla protein cleaves between Arg-580 and Val-581, generating plasmin which facilitates bacterial migration and infection. As to expression, present in plasma and many other extracellular fluids. It is synthesized in the liver.

It localises to the secreted. The catalysed reaction is Preferential cleavage: Lys-|-Xaa &gt; Arg-|-Xaa, higher selectivity than trypsin. Converts fibrin into soluble products.. Converted into plasmin by plasminogen activators, both plasminogen and its activator being bound to fibrin. Activated with catalytic amounts of streptokinase. Plasmin activity inhibited by SERPINE2. Plasmin dissolves the fibrin of blood clots and acts as a proteolytic factor in a variety of other processes including embryonic development, tissue remodeling, tumor invasion, and inflammation. In ovulation, weakens the walls of the Graafian follicle. It activates the urokinase-type plasminogen activator, collagenases and several complement zymogens, such as C1, C4 and C5. Cleavage of fibronectin and laminin leads to cell detachment and apoptosis. Also cleaves fibrin, thrombospondin and von Willebrand factor. Its role in tissue remodeling and tumor invasion may be modulated by CSPG4. Binds to cells. Functionally, angiostatin is an angiogenesis inhibitor that blocks neovascularization and growth of experimental primary and metastatic tumors in vivo. Its function is as follows. (Microbial infection) ENO/enoloase from parasite P.falciparum (strain NF54) interacts with PLG present in the mosquito blood meal to promote the invasion of the mosquito midgut by the parasite ookinete. The catalytic active form, plasmin, is essential for the invasion of the mosquito midgut. In terms of biological role, (Microbial infection) Binds to OspC on the surface of B.burgdorferi cells, possibly conferring an extracellular protease activity on the bacteria that allows it to traverse host tissue. (Microbial infection) Interacts with dengue virus type 2 particles. Enhances dengue virus type 2 infection in Aedes aegypti mosquito midgut by increasing midgut internalization, resulting in higher infection rates and viral dissemination in mosquitoes. This Homo sapiens (Human) protein is Plasminogen (PLG).